The primary structure comprises 218 residues: Claudin-5 (218 aa).

The Cytoplasmic portion of the chain corresponds to 1 to 7 (MGSAALE). The chain crosses the membrane as a helical span at residues 8–28 (ILGLVLCLVGWGGLILACGLP). Residues 29-81 (MWQVTAFLDHNIVTAQTTWKGLWMSCVVQSTGHMQCKVYDSVLALSTEVQAAR) are Extracellular-facing. Residues 82-102 (ALTVSAVLLAFVALFVTLAGA) form a helical membrane-spanning segment. At 103–122 (QCTTCVAPGPAKARVALTGG) the chain is on the cytoplasmic side. The helical transmembrane segment at 123 to 143 (VLYLFCGLLALVPLCWFANIV) threads the bilayer. At 144-159 (VREFYDPSVPVSQKYE) the chain is on the extracellular side. A helical transmembrane segment spans residues 160-180 (LGAALYIGWAATALLMVGGCL). Topologically, residues 181-218 (LCCGAWVCTGRPDLSFPVKYSAPRRPTATGDYDKKNYV) are cytoplasmic. Positions 217–218 (YV) are interactions with TJP1, TJP2 and TJP3.

This sequence belongs to the claudin family. In terms of assembly, directly interacts with TJP1/ZO-1, TJP2/ZO-2 and TJP3/ZO-3. Interacts with MPDZ.

It is found in the cell junction. The protein localises to the tight junction. The protein resides in the cell membrane. In terms of biological role, plays a major role in tight junction-specific obliteration of the intercellular space. The polypeptide is Claudin-5 (CLDN5) (Homo sapiens (Human)).